A 164-amino-acid polypeptide reads, in one-letter code: Ribosome-binding factor A (164 aa).

This sequence belongs to the RbfA family. As to quaternary structure, monomer. Binds 30S ribosomal subunits, but not 50S ribosomal subunits or 70S ribosomes.

Its subcellular location is the cytoplasm. Functionally, one of several proteins that assist in the late maturation steps of the functional core of the 30S ribosomal subunit. Associates with free 30S ribosomal subunits (but not with 30S subunits that are part of 70S ribosomes or polysomes). Required for efficient processing of 16S rRNA. May interact with the 5'-terminal helix region of 16S rRNA. In Caulobacter sp. (strain K31), this protein is Ribosome-binding factor A.